We begin with the raw amino-acid sequence, 241 residues long: uncharacterized protein (241 aa).

Disordered stretches follow at residues 19 to 59 (ERDR…QQLG), 101 to 139 (VRRPNPSVPSPLPKPPVPSAGSCEPLAPPPTSASGASRS), and 152 to 182 (RGCRPAPGSAAGWPRSDRRARLPRKASKPCS). Residues 34–48 (ARGGRGLWTVGGGGS) show a composition bias toward gly residues. Residues 49–58 (PTETAESQQL) show a composition bias toward polar residues. Pro residues predominate over residues 106–118 (PSVPSPLPKPPVP).

This is an uncharacterized protein from Homo sapiens (Human).